Here is a 653-residue protein sequence, read N- to C-terminus: Rab proteins geranylgeranyltransferase component A 1 (653 aa).

The segment at 606–653 (PPPPNPEDIILDGDSLQPEASESSAIPEANSETFKESTNLGNLEESSE) is disordered. Polar residues predominate over residues 623-646 (PEASESSAIPEANSETFKESTNLG).

This sequence belongs to the Rab GDI family. In terms of assembly, monomer. Heterotrimer composed of RABGGTA, RABGGTB and CHM; within this trimer, RABGGTA and RABGGTB form the catalytic component B, while CHM (component A) mediates Rab protein binding. Can associate with the Rab GGTase dimer (RGGT or component B) prior to Rab protein binding; the association is stabilized by geranylgeranyl pyrophosphate (GGpp). The CHM:RGGT:Rab complex is destabilized by GGpp. Interacts with RAB1A, RAB1B, RAB5A, RAB7A and RAB27A and mediates their prenylation. Interacts with the non-phosphorylated forms of RAB3A, RAB3B, RAB3C, RAB3D, RAB5B, RAB5C, RAB8A, RAB8B, RAB10, RAB12, RAB35, and RAB43.

The protein localises to the cytoplasm. It is found in the cytosol. Its function is as follows. Substrate-binding subunit of the Rab geranylgeranyltransferase (GGTase) complex. Binds unprenylated Rab proteins and presents the substrate peptide to the catalytic component B composed of RABGGTA and RABGGTB, and remains bound to it after the geranylgeranyl transfer reaction. The component A is thought to be regenerated by transferring its prenylated Rab back to the donor membrane. Besides, a pre-formed complex consisting of CHM and the Rab GGTase dimer (RGGT or component B) can bind to and prenylate Rab proteins; this alternative pathway is proposed to be the predominant pathway for Rab protein geranylgeranylation. The chain is Rab proteins geranylgeranyltransferase component A 1 (CHM) from Homo sapiens (Human).